The following is a 101-amino-acid chain: MNLSLREIQKLLVTVAADVARRRLARGLKLNYSEAVALITDHVVEGARDGKLVADLMQSAREVLRVDQVMEGVDTMVGIIQVEVTFPDGTKLVSVHDPIYK.

This sequence belongs to the urease gamma subunit family. In terms of assembly, heterotrimer of UreA (gamma), UreB (beta) and UreC (alpha) subunits. Three heterotrimers associate to form the active enzyme.

It localises to the cytoplasm. It catalyses the reaction urea + 2 H2O + H(+) = hydrogencarbonate + 2 NH4(+). It functions in the pathway nitrogen metabolism; urea degradation; CO(2) and NH(3) from urea (urease route): step 1/1. The protein is Urease subunit gamma of Ureaplasma urealyticum serovar 10 (strain ATCC 33699 / Western).